Here is a 1086-residue protein sequence, read N- to C-terminus: Tyrosine-protein kinase receptor svh-2 (1086 aa).

An N-terminal signal peptide occupies residues 1–34 (MVLGSSQSSAKELTTQSSIFRFLVLLLCFTSATG). Residues 35 to 651 (GQINGKLLNG…DKKGSSPGWK (617 aa)) are Extracellular-facing. N-linked (GlcNAc...) asparagine glycans are attached at residues Asn-276, Asn-299, Asn-461, Asn-554, and Asn-617. Residues 652–672 (IAIAIISVMTIILIVAIIVYY) traverse the membrane as a helical segment. Topologically, residues 673–1086 (MRNRFPRIKT…LLSECSETSV (414 aa)) are cytoplasmic. Residues 735-996 (VDKLDPIGQG…SDLVTIIPNV (262 aa)) enclose the Protein kinase domain. Residues 741–749 (IGQGHYGVV) and Lys-767 contribute to the ATP site. Asp-858 (proton acceptor) is an active-site residue. Tyr-890 bears the Phosphotyrosine mark. The tract at residues 1056–1086 (AELPSDSPSTSTAIPQSTPYQLLSECSETSV) is disordered. A compositionally biased stretch (polar residues) spans 1061–1086 (DSPSTSTAIPQSTPYQLLSECSETSV).

Belongs to the protein kinase superfamily. Tyr protein kinase family. In terms of assembly, interacts (via cytoplasmic domain) with mlk-1. Interacts with shc-1 (via SH2 domain). May interact (when tyrosine-phosphorylated) with tns-1 (via SH2 domain). In terms of processing, may be autophosphorylated on Tyr-890 following dimerization. As to expression, expressed in body wall and vulva muscles, pharynx, intestine, excretory canals, distal tip cells and some neurons. Expressed in D-type motor neurons upon axon injury.

The protein localises to the cell membrane. It catalyses the reaction L-tyrosyl-[protein] + ATP = O-phospho-L-tyrosyl-[protein] + ADP + H(+). Functionally, receptor tyrosine kinase which may phosphorylate mlk-1, a component of the mlk-1, mek-1 and kgb-1 pathway. Involved in axon regeneration after injury by promoting the generation of productive and stable growth cones. The sequence is that of Tyrosine-protein kinase receptor svh-2 from Caenorhabditis elegans.